The sequence spans 1224 residues: Dynactin subunit 1 (1224 aa).

Over residues 1–10 (MAQSRRHPHG) the composition is skewed to basic residues. The interval 1–30 (MAQSRRHPHGRASSAGPRMSTEASSKPLKV) is disordered. The CAP-Gly domain maps to 49-91 (GATLXATGKWVGVILDEAKGKNDGTVQGRKYFTCEENHGIFVR). Disordered stretches follow at residues 100–217 (DGAD…RSQV), 374–402 (SASE…RQQR), and 888–918 (PHCH…PPAE). Positions 117–146 (VPKRHSRXAAKGSKLRGAKPKKTTARRPKP) are enriched in basic residues. The segment covering 148-180 (RTPTSAPSSGTAGPSGSASASGGEMSSSEPSTP) has biased composition (low complexity). Residues 205–540 (SPTKEEENLR…QEASAEKQQQ (336 aa)) are a coiled coil. Over residues 207 to 217 (TKEEENLRSQV) the composition is skewed to basic and acidic residues. Coiled-coil stretches lie at residues 936 to 1042 (LKLE…EGLR) and 1081 to 1117 (KDSP…LELA). Residues 1203-1224 (WCSSSRARASPPASACSPPRPS) are disordered. Over residues 1204-1224 (CSSSRARASPPASACSPPRPS) the composition is skewed to low complexity.

This sequence belongs to the dynactin 150 kDa subunit family. In terms of assembly, monomer and homodimer. Subunit of dynactin, a multiprotein complex part of a tripartite complex with dynein and a adapter, such as BICDL1, BICD2 or HOOK3. The dynactin complex is built around ACTR1A/ACTB filament and consists of an actin-related filament composed of a shoulder domain, a pointed end and a barbed end. Its length is defined by its flexible shoulder domain. The soulder is composed of 2 DCTN1 subunits, 4 DCTN2 and 2 DCTN3. DCTN1/p150(glued) binds directly to microtubules and to cytoplasmic dynein. As to expression, ubiquitously expressed.

The protein resides in the cytoplasm. Its subcellular location is the cytoskeleton. It localises to the microtubule organizing center. It is found in the centrosome. The protein localises to the centriole. The protein resides in the spindle. Its subcellular location is the cell cortex. In terms of biological role, part of the dynactin complex that activates the molecular motor dynein for ultra-processive transport along microtubules. Plays a key role in dynein-mediated retrograde transport of vesicles and organelles along microtubules by recruiting and tethering dynein to microtubules. Binds to both dynein and microtubules providing a link between specific cargos, microtubules and dynein. Essential for targeting dynein to microtubule plus ends, recruiting dynein to membranous cargos and enhancing dynein processivity (the ability to move along a microtubule for a long distance without falling off the track). Can also act as a brake to slow the dynein motor during motility along the microtubule. Can regulate microtubule stability by promoting microtubule formation, nucleation and polymerization and by inhibiting microtubule catastrophe in neurons. Inhibits microtubule catastrophe by binding both to microtubules and to tubulin, leading to enhanced microtubule stability along the axon. Plays a role in metaphase spindle orientation. Plays a role in centriole cohesion and subdistal appendage organization and function. Its recruitment to the centriole in a KIF3A-dependent manner is essential for the maintenance of centriole cohesion and the formation of subdistal appendage. Also required for microtubule anchoring at the mother centriole. Plays a role in primary cilia formation. This chain is Dynactin subunit 1 (DCTN1), found in Gallus gallus (Chicken).